The chain runs to 251 residues: Capsid protein (251 aa).

The Bipartite nuclear localization signal signature appears at 3-20 (KRDAPWRLMAGTSKVSRS). The short motif at 35 to 49 (KAAAWVNRPMYRKPR) is the Nuclear localization signal element. A zinc finger spans residues 63-80 (CEGPCKVQSYEQRHDISH). Residues 96 to 117 (ITHRVGKRFCVKSVYILGKIWM) carry the Nuclear export signal motif. The short motif at 195–242 (RRFWKVNNHVVYNHQEAGKYENHTENALLLYMACTHASNPVYATLKIR) is the Bipartite nuclear localization signal element.

It belongs to the geminiviridae capsid protein family. Homomultimer. Binds to single-stranded and double-stranded viral DNA. Interacts (via nuclear localization signals) with host importin alpha-1a.

Its subcellular location is the virion. It is found in the host nucleus. Encapsidates the viral DNA into characteristic twinned ('geminate') particles. Binds the genomic viral ssDNA and shuttles it into and out of the cell nucleus. The CP of bipartite geminiviruses is not required for cell-to-cell or systemic movement. The protein is Capsid protein of Squash leaf curl virus (SLCV).